A 325-amino-acid chain; its full sequence is Endo-1,4-beta-xylanase 2 (325 aa).

The first 18 residues, 1–18, serve as a signal peptide directing secretion; sequence MLYTSIFAAAMAASGAMA. In terms of domain architecture, GH10 spans 26 to 325; it reads ASNCTTLDSF…KAAVKAIMAI (300 aa). An N-linked (GlcNAc...) asparagine glycan is attached at asparagine 28. Glutamate 157 serves as the catalytic Proton donor. Residue glutamate 262 is the Nucleophile of the active site. An intrachain disulfide couples cysteine 280 to cysteine 286.

This sequence belongs to the glycosyl hydrolase 10 (cellulase F) family.

It is found in the secreted. The catalysed reaction is Endohydrolysis of (1-&gt;4)-beta-D-xylosidic linkages in xylans.. Its pathway is glycan degradation; xylan degradation. In terms of biological role, endo-1,4-beta-xylanase involved in the hydrolysis of xylan, a major structural heterogeneous polysaccharide found in plant biomass representing the second most abundant polysaccharide in the biosphere, after cellulose. The chain is Endo-1,4-beta-xylanase 2 (xyl2) from Claviceps purpurea (Ergot fungus).